A 192-amino-acid chain; its full sequence is Putative cyclic ADP-D-ribose synthase ThsB1 (192 aa).

This sequence belongs to the Thoeris B TIR-like family. In terms of assembly, monomer; not seen to interact with ThsA.

It localises to the cytoplasm. With respect to regulation, activated upon phage infection. Its function is as follows. TIR-like domain-containing component of the Thoeris antiviral defense system, composed of ThsA and ThsB. Expression of ThsA and ThsB in B.subtilis (strain BEST7003) confers resistance to phages SBSphiC, SBSphiJ and SPO1. Phage infection activates this protein so that 30 to 45 minutes post-infection with phage SPO1 it generates a signal molecule that in turn activates the NAD(+) hydrolase activity of ThsA. The signal is similar to cyclic ADP-D-ribose, but how it differs is unknown. In vitro purified (but unactivated) ThsB has no NAD(+) hydrolyzing activity, no activity on AMP, CMP, GMP or UMP, does not alter the activity of ThsA, does not bind DNA. Hydrolyzes NAD(+) to make a cyclic ADP-D-ribose (cADPR) signaling molecule; might make 3'cADPR. In Bacillus cereus (strain MSX-D12), this protein is Putative cyclic ADP-D-ribose synthase ThsB1.